The sequence spans 196 residues: Glycerol-3-phosphate acyltransferase (196 aa).

Transmembrane regions (helical) follow at residues 4 to 24 (FYIM…VVLT), 53 to 73 (LGVL…LIAI), 78 to 98 (LGDA…CYPV), 114 to 134 (IFLV…ALLV), and 140 to 160 (VSLG…FTEG).

This sequence belongs to the PlsY family. Probably interacts with PlsX.

It is found in the cell inner membrane. The catalysed reaction is an acyl phosphate + sn-glycerol 3-phosphate = a 1-acyl-sn-glycero-3-phosphate + phosphate. The protein operates within lipid metabolism; phospholipid metabolism. Its function is as follows. Catalyzes the transfer of an acyl group from acyl-phosphate (acyl-PO(4)) to glycerol-3-phosphate (G3P) to form lysophosphatidic acid (LPA). This enzyme utilizes acyl-phosphate as fatty acyl donor, but not acyl-CoA or acyl-ACP. The sequence is that of Glycerol-3-phosphate acyltransferase from Syntrophotalea carbinolica (strain DSM 2380 / NBRC 103641 / GraBd1) (Pelobacter carbinolicus).